A 624-amino-acid chain; its full sequence is tRNA uridine 5-carboxymethylaminomethyl modification enzyme MnmG (624 aa).

FAD-binding positions include 13–18, V125, and S180; that span reads GGGHAG. 273–287 serves as a coordination point for NAD(+); it reads GPRYCPSIEDKIVRF. FAD is bound at residue Q370.

This sequence belongs to the MnmG family. As to quaternary structure, homodimer. Heterotetramer of two MnmE and two MnmG subunits. Requires FAD as cofactor.

The protein localises to the cytoplasm. Functionally, NAD-binding protein involved in the addition of a carboxymethylaminomethyl (cmnm) group at the wobble position (U34) of certain tRNAs, forming tRNA-cmnm(5)s(2)U34. The sequence is that of tRNA uridine 5-carboxymethylaminomethyl modification enzyme MnmG from Legionella pneumophila subsp. pneumophila (strain Philadelphia 1 / ATCC 33152 / DSM 7513).